The following is a 292-amino-acid chain: 11-beta-hydroxysteroid dehydrogenase 1 (292 aa).

Residues Ala-2–Tyr-7 are Cytoplasmic-facing. The helical; Signal-anchor for type II membrane protein transmembrane segment at Leu-8–Asn-24 threads the bilayer. Residues Glu-25–Asn-292 lie on the Lumenal side of the membrane. NADP(+)-binding positions include Gly-41 to Ser-67, Thr-92 to Met-93, and Asn-119 to Ile-121. Asn-123 and Asn-162 each carry an N-linked (GlcNAc...) asparagine glycan. Ser-170 contacts substrate. Residue Tyr-183 is the Proton acceptor of the active site. Position 183-187 (Tyr-183–Lys-187) interacts with NADP(+). A glycan (N-linked (GlcNAc...) asparagine) is linked at Asn-207. Ile-218–Thr-222 is a binding site for NADP(+).

Belongs to the short-chain dehydrogenases/reductases (SDR) family. Homodimer. Post-translationally, glycosylated. In terms of tissue distribution, expressed in the eye.

The protein resides in the endoplasmic reticulum membrane. It is found in the microsome membrane. It catalyses the reaction an 11beta-hydroxysteroid + NADP(+) = an 11-oxosteroid + NADPH + H(+). It carries out the reaction corticosterone + NADP(+) = 11-dehydrocorticosterone + NADPH + H(+). The enzyme catalyses cortisone + NADPH + H(+) = cortisol + NADP(+). The catalysed reaction is a 7beta-hydroxysteroid + NADP(+) = a 7-oxosteroid + NADPH + H(+). It catalyses the reaction 7-oxocholesterol + NADPH + H(+) = 7beta-hydroxycholesterol + NADP(+). It carries out the reaction chenodeoxycholate + NADP(+) = 7-oxolithocholate + NADPH + H(+). The enzyme catalyses 7-oxolithocholate + NADPH + H(+) = ursodeoxycholate + NADP(+). The catalysed reaction is glycochenodeoxycholate + NADP(+) = 7-oxoglycolithocholate + NADPH + H(+). It catalyses the reaction taurochenodeoxycholate + NADP(+) = 7-oxotaurolithocholate + NADPH + H(+). It carries out the reaction tauroursodeoxycholate + NADP(+) = 7-oxotaurolithocholate + NADPH + H(+). The enzyme catalyses glycoursodeoxycholate + NADP(+) = 7-oxoglycolithocholate + NADPH + H(+). The catalysed reaction is 7-oxopregnenolone + NADPH + H(+) = 7beta-hydroxypregnenolone + NADP(+). It catalyses the reaction 3beta,7alpha-dihydroxyandrost-5-en-17-one + NADP(+) = 3beta-hydroxy-5-androstene-7,17-dione + NADPH + H(+). It carries out the reaction 3beta-hydroxy-5-androstene-7,17-dione + NADPH + H(+) = 3beta,7beta-dihydroxyandrost-5-en-17-one + NADP(+). The enzyme catalyses 3beta-hydroxy-5alpha-androstane-7,17-dione + NADPH + H(+) = 3beta,7beta-dihydroxy-5alpha-androstan-17-one + NADP(+). It participates in steroid metabolism. In terms of biological role, controls the reversible conversion of biologically active glucocorticoids such as cortisone to cortisol, and 11-dehydrocorticosterone to corticosterone in the presence of NADP(H). Participates in the corticosteroid receptor-mediated anti-inflammatory response, as well as metabolic and homeostatic processes. Plays a role in the secretion of aqueous humor in the eye, maintaining a normotensive, intraocular environment. Bidirectional in vitro, predominantly functions as a reductase in vivo, thereby increasing the concentration of active glucocorticoids. It has broad substrate specificity, besides glucocorticoids, it accepts other steroid and sterol substrates. It has broad substrate specificity, besides glucocorticoids, it accepts other steroid and sterol substrates. Interconverts 7-oxo- and 7-hydroxy-neurosteroids such as 7-oxopregnenolone and 7beta-hydroxypregnenolone, 7-oxodehydroepiandrosterone (3beta-hydroxy-5-androstene-7,17-dione) and 7beta-hydroxydehydroepiandrosterone (3beta,7beta-dihydroxyandrost-5-en-17-one), among others. Catalyzes the stereo-specific conversion of the major dietary oxysterol, 7-ketocholesterol (7-oxocholesterol), into the more polar 7-beta-hydroxycholesterol metabolite. 7-oxocholesterol is one of the most important oxysterols, it participates in several events such as induction of apoptosis, accumulation in atherosclerotic lesions, lipid peroxidation, and induction of foam cell formation. Mediates the 7-oxo reduction of 7-oxolithocholate mainly to chenodeoxycholate, and to a lesser extent to ursodeoxycholate, both in its free form and when conjugated to glycine or taurine, providing a link between glucocorticoid activation and bile acid metabolism. Catalyzes the synthesis of 7-beta-25-dihydroxycholesterol from 7-oxo-25-hydroxycholesterol in vitro, which acts as a ligand for the G-protein-coupled receptor (GPCR) Epstein-Barr virus-induced gene 2 (EBI2) and may thereby regulate immune cell migration. The polypeptide is 11-beta-hydroxysteroid dehydrogenase 1 (Oryctolagus cuniculus (Rabbit)).